A 332-amino-acid chain; its full sequence is Ribosomal RNA small subunit methyltransferase C (332 aa).

Belongs to the methyltransferase superfamily. RsmC family. Monomer.

The protein resides in the cytoplasm. It carries out the reaction guanosine(1207) in 16S rRNA + S-adenosyl-L-methionine = N(2)-methylguanosine(1207) in 16S rRNA + S-adenosyl-L-homocysteine + H(+). Specifically methylates the guanine in position 1207 of 16S rRNA in the 30S particle. This chain is Ribosomal RNA small subunit methyltransferase C, found in Pseudomonas putida (strain ATCC 47054 / DSM 6125 / CFBP 8728 / NCIMB 11950 / KT2440).